The following is a 403-amino-acid chain: Argininosuccinate synthase (403 aa).

Residues Ala13–Ser21 and Ala40 contribute to the ATP site. 2 residues coordinate L-citrulline: Tyr91 and Ser96. Gly121 provides a ligand contact to ATP. L-aspartate contacts are provided by Thr123, Asn127, and Asp128. Asn127 contacts L-citrulline. 5 residues coordinate L-citrulline: Arg131, Ser180, Ser189, Glu265, and Tyr277.

The protein belongs to the argininosuccinate synthase family. Type 1 subfamily. In terms of assembly, homotetramer.

It localises to the cytoplasm. It carries out the reaction L-citrulline + L-aspartate + ATP = 2-(N(omega)-L-arginino)succinate + AMP + diphosphate + H(+). Its pathway is amino-acid biosynthesis; L-arginine biosynthesis; L-arginine from L-ornithine and carbamoyl phosphate: step 2/3. The polypeptide is Argininosuccinate synthase (Leptospira borgpetersenii serovar Hardjo-bovis (strain JB197)).